Reading from the N-terminus, the 146-residue chain is MKLHELQPAAGSRKVRNRVGRGTSSGNGKTAGRGQKGQKARSGGGVRLGFEGGQTPLFRRLPKRGFLNVNRKEYAIVNLDQLNAFEDGAEVTPVVLVESGIVKAEKSGVKILGNGELTKKLTVKAAKFSKSAEEAITAKGGSVEVI.

The interval M1–E51 is disordered. Gly residues-rich tracts occupy residues T23 to Q35 and S42 to E51.

Belongs to the universal ribosomal protein uL15 family. As to quaternary structure, part of the 50S ribosomal subunit.

Functionally, binds to the 23S rRNA. In Streptococcus gordonii (strain Challis / ATCC 35105 / BCRC 15272 / CH1 / DL1 / V288), this protein is Large ribosomal subunit protein uL15.